The following is a 1400-amino-acid chain: DNA-directed RNA polymerase subunit beta' (1400 aa).

Zn(2+) is bound by residues Cys70, Cys72, Cys85, and Cys88. Mg(2+) is bound by residues Asp460, Asp462, and Asp464. Residues Cys814, Cys889, Cys896, and Cys899 each contribute to the Zn(2+) site.

This sequence belongs to the RNA polymerase beta' chain family. The RNAP catalytic core consists of 2 alpha, 1 beta, 1 beta' and 1 omega subunit. When a sigma factor is associated with the core the holoenzyme is formed, which can initiate transcription. Requires Mg(2+) as cofactor. It depends on Zn(2+) as a cofactor.

It carries out the reaction RNA(n) + a ribonucleoside 5'-triphosphate = RNA(n+1) + diphosphate. Functionally, DNA-dependent RNA polymerase catalyzes the transcription of DNA into RNA using the four ribonucleoside triphosphates as substrates. The sequence is that of DNA-directed RNA polymerase subunit beta' from Alcanivorax borkumensis (strain ATCC 700651 / DSM 11573 / NCIMB 13689 / SK2).